The sequence spans 445 residues: Tol-Pal system protein TolB (445 aa).

Positions 1 to 26 (MLNRRNFIRTTSALAASTALPGYAFG) are cleaved as a signal peptide.

Belongs to the TolB family. As to quaternary structure, the Tol-Pal system is composed of five core proteins: the inner membrane proteins TolA, TolQ and TolR, the periplasmic protein TolB and the outer membrane protein Pal. They form a network linking the inner and outer membranes and the peptidoglycan layer.

It localises to the periplasm. Its function is as follows. Part of the Tol-Pal system, which plays a role in outer membrane invagination during cell division and is important for maintaining outer membrane integrity. The chain is Tol-Pal system protein TolB from Jannaschia sp. (strain CCS1).